Reading from the N-terminus, the 287-residue chain is Pantothenate synthetase (287 aa).

30–37 (MGNLHDGH) contributes to the ATP binding site. Catalysis depends on His37, which acts as the Proton donor. Gln61 contributes to the (R)-pantoate binding site. Gln61 contacts beta-alanine. ATP is bound at residue 148-151 (GQKD). Gln154 is a binding site for (R)-pantoate. Residues Ile177 and 185–188 (LSSR) each bind ATP.

The protein belongs to the pantothenate synthetase family. As to quaternary structure, homodimer.

The protein localises to the cytoplasm. It carries out the reaction (R)-pantoate + beta-alanine + ATP = (R)-pantothenate + AMP + diphosphate + H(+). It functions in the pathway cofactor biosynthesis; (R)-pantothenate biosynthesis; (R)-pantothenate from (R)-pantoate and beta-alanine: step 1/1. Functionally, catalyzes the condensation of pantoate with beta-alanine in an ATP-dependent reaction via a pantoyl-adenylate intermediate. The polypeptide is Pantothenate synthetase (Psychrobacter cryohalolentis (strain ATCC BAA-1226 / DSM 17306 / VKM B-2378 / K5)).